Here is a 189-residue protein sequence, read N- to C-terminus: Glutathione-dependent formaldehyde-activating enzyme (189 aa).

In terms of domain architecture, CENP-V/GFA spans 20–166; the sequence is FAGGTLVCAC…LRTIGLEPYD (147 aa). Positions 27, 29, 48, 50, 53, 95, and 98 each coordinate Zn(2+).

Belongs to the Gfa family. It depends on Zn(2+) as a cofactor.

The catalysed reaction is S-(hydroxymethyl)glutathione = glutathione + formaldehyde. The protein operates within one-carbon metabolism; formaldehyde degradation; formate from formaldehyde (glutathione route): step 1/3. Catalyzes the condensation of formaldehyde and glutathione to S-hydroxymethylglutathione. The sequence is that of Glutathione-dependent formaldehyde-activating enzyme from Mesorhizobium japonicum (strain LMG 29417 / CECT 9101 / MAFF 303099) (Mesorhizobium loti (strain MAFF 303099)).